The sequence spans 225 residues: Ribosomal RNA small subunit methyltransferase G (225 aa).

S-adenosyl-L-methionine-binding positions include G89, L94, I140–E141, and R157.

Belongs to the methyltransferase superfamily. RNA methyltransferase RsmG family.

It is found in the cytoplasm. The catalysed reaction is guanosine(527) in 16S rRNA + S-adenosyl-L-methionine = N(7)-methylguanosine(527) in 16S rRNA + S-adenosyl-L-homocysteine. Its function is as follows. Specifically methylates the N7 position of guanine in position 527 of 16S rRNA. In Psychrobacter sp. (strain PRwf-1), this protein is Ribosomal RNA small subunit methyltransferase G.